The chain runs to 1106 residues: Platelet-derived growth factor receptor beta (1106 aa).

An N-terminal signal peptide occupies residues 1 to 32 (MRLPGAMPALALKGELLLLSLLLLLEPQISQG). 5 consecutive Ig-like C2-type domains span residues 33–120 (LVVT…YIFV), 129–210 (PNDA…YRLQ), 214–309 (INVS…INIT), 331–403 (HRSR…HEDA), and 416–524 (PVRV…VIVV). The Extracellular portion of the chain corresponds to 33–532 (LVVTPPGPEL…VVPHSLPFKV (500 aa)). Residues Asn-45, Asn-89, and Asn-103 are each glycosylated (N-linked (GlcNAc...) asparagine). Cys-54 and Cys-100 are oxidised to a cystine. Cysteines 149 and 190 form a disulfide. N-linked (GlcNAc...) asparagine glycans are attached at residues Asn-215 and Asn-230. Cys-235 and Cys-291 are disulfide-bonded. Asn-292, Asn-307, Asn-354, Asn-371, Asn-468, and Asn-479 each carry an N-linked (GlcNAc...) asparagine glycan. Cys-436 and Cys-508 form a disulfide bridge. Residues 533–553 (VVISAILALVVLTIISLIILI) traverse the membrane as a helical segment. Residues 554–1106 (MLWQKKPRYE…PRAEAEDSFL (553 aa)) lie on the Cytoplasmic side of the membrane. Tyr-562, Tyr-579, and Tyr-581 each carry phosphotyrosine; by autocatalysis. Residues 600 to 962 (LVLGRTLGSG…QLVLLLERLL (363 aa)) enclose the Protein kinase domain. Residues 606-614 (LGSGAFGQV) and Lys-634 each bind ATP. Residue Tyr-686 is modified to Phosphotyrosine; by ABL1 and ABL2. A phosphotyrosine; by autocatalysis mark is found at Tyr-716, Tyr-740, Tyr-751, Tyr-763, Tyr-771, Tyr-775, and Tyr-778. Asp-826 acts as the Proton acceptor in catalysis. Tyr-857 is modified (phosphotyrosine; by autocatalysis). Phosphotyrosine; by ABL1 and ABL2 is present on residues Tyr-934 and Tyr-970. Residues Tyr-1009 and Tyr-1021 each carry the phosphotyrosine; by autocatalysis modification. Positions 1019–1106 (NDYIIPLPDP…PRAEAEDSFL (88 aa)) are disordered. Residues 1043–1060 (SLASSTLNEVNTSSTISC) show a composition bias toward polar residues. Over residues 1066 to 1088 (PQDEPEPEPQLELQVEPEPELEQ) the composition is skewed to acidic residues.

Belongs to the protein kinase superfamily. Tyr protein kinase family. CSF-1/PDGF receptor subfamily. Interacts with homodimeric PDGFB and PDGFD, and with heterodimers formed by PDGFA and PDGFB. May also interact with homodimeric PDGFC. Monomer in the absence of bound ligand. Interaction with homodimeric PDGFB, heterodimers formed by PDGFA and PDGFB or homodimeric PDGFD, leads to receptor dimerization, where both PDGFRA homodimers and heterodimers with PDGFRB are observed. Interacts with SH2B2/APS. Interacts directly (tyrosine phosphorylated) with SHB. Interacts (tyrosine phosphorylated) with PIK3R1 and RASA1. Interacts (tyrosine phosphorylated) with CBL. Interacts (tyrosine phosphorylated) with SRC and SRC family kinases. Interacts (tyrosine phosphorylated) with PIK3C2B, maybe indirectly. Interacts (tyrosine phosphorylated) with SHC1, GRB7, GRB10 and NCK1. Interaction with GRB2 is mediated by SHC1. Interacts (via C-terminus) with NHERF1. Post-translationally, autophosphorylated on tyrosine residues upon ligand binding. Autophosphorylation occurs in trans, i.e. one subunit of the dimeric receptor phosphorylates tyrosine residues on the other subunit. Phosphorylation at Tyr-579, and to a lesser degree, at Tyr-581, is important for interaction with SRC family kinases. Phosphorylation at Tyr-740 and Tyr-751 is important for interaction with PIK3R1. Phosphorylation at Tyr-751 is important for interaction with NCK1. Phosphorylation at Tyr-771 and Tyr-857 is important for interaction with RASA1/GAP. Phosphorylation at Tyr-857 is important for efficient phosphorylation of PLCG1 and PTPN11, resulting in increased phosphorylation of AKT1, MAPK1/ERK2 and/or MAPK3/ERK1, PDCD6IP/ALIX and STAM, and in increased cell proliferation. Phosphorylation at Tyr-1009 is important for interaction with PTPN11. Phosphorylation at Tyr-1009 and Tyr-1021 is important for interaction with PLCG1. Phosphorylation at Tyr-1021 is important for interaction with CBL; PLCG1 and CBL compete for the same binding site. Dephosphorylated by PTPRJ at Tyr-751, Tyr-857, Tyr-1009 and Tyr-1021. Dephosphorylated by PTPN2 at Tyr-579 and Tyr-1021. N-glycosylated. In terms of processing, ubiquitinated. After autophosphorylation, the receptor is polyubiquitinated, leading to its degradation.

It is found in the cell membrane. Its subcellular location is the cytoplasmic vesicle. The protein localises to the lysosome lumen. The catalysed reaction is L-tyrosyl-[protein] + ATP = O-phospho-L-tyrosyl-[protein] + ADP + H(+). Its activity is regulated as follows. Present in an inactive conformation in the absence of bound ligand. Binding of PDGFB and/or PDGFD leads to dimerization and activation by autophosphorylation on tyrosine residues. Inhibited by imatinib. Its function is as follows. Tyrosine-protein kinase that acts as a cell-surface receptor for homodimeric PDGFB and PDGFD and for heterodimers formed by PDGFA and PDGFB, and plays an essential role in the regulation of embryonic development, cell proliferation, survival, differentiation, chemotaxis and migration. Plays an essential role in blood vessel development by promoting proliferation, migration and recruitment of pericytes and smooth muscle cells to endothelial cells. Plays a role in the migration of vascular smooth muscle cells and the formation of neointima at vascular injury sites. Required for normal development of the cardiovascular system. Required for normal recruitment of pericytes (mesangial cells) in the kidney glomerulus, and for normal formation of a branched network of capillaries in kidney glomeruli. Promotes rearrangement of the actin cytoskeleton and the formation of membrane ruffles. Binding of its cognate ligands - homodimeric PDGFB, heterodimers formed by PDGFA and PDGFB or homodimeric PDGFD -leads to the activation of several signaling cascades; the response depends on the nature of the bound ligand and is modulated by the formation of heterodimers between PDGFRA and PDGFRB. Phosphorylates PLCG1, PIK3R1, PTPN11, RASA1/GAP, CBL, SHC1 and NCK1. Activation of PLCG1 leads to the production of the cellular signaling molecules diacylglycerol and inositol 1,4,5-trisphosphate, mobilization of cytosolic Ca(2+) and the activation of protein kinase C. Phosphorylation of PIK3R1, the regulatory subunit of phosphatidylinositol 3-kinase, leads to the activation of the AKT1 signaling pathway. Phosphorylation of SHC1, or of the C-terminus of PTPN11, creates a binding site for GRB2, resulting in the activation of HRAS, RAF1 and down-stream MAP kinases, including MAPK1/ERK2 and/or MAPK3/ERK1. Promotes phosphorylation and activation of SRC family kinases. Promotes phosphorylation of PDCD6IP/ALIX and STAM. Receptor signaling is down-regulated by protein phosphatases that dephosphorylate the receptor and its down-stream effectors, and by rapid internalization of the activated receptor. This chain is Platelet-derived growth factor receptor beta (PDGFRB), found in Homo sapiens (Human).